Reading from the N-terminus, the 196-residue chain is Large ribosomal subunit protein bL25 (196 aa).

This sequence belongs to the bacterial ribosomal protein bL25 family. CTC subfamily. As to quaternary structure, part of the 50S ribosomal subunit; part of the 5S rRNA/L5/L18/L25 subcomplex. Contacts the 5S rRNA. Binds to the 5S rRNA independently of L5 and L18.

Its function is as follows. This is one of the proteins that binds to the 5S RNA in the ribosome where it forms part of the central protuberance. In Bacteroides thetaiotaomicron (strain ATCC 29148 / DSM 2079 / JCM 5827 / CCUG 10774 / NCTC 10582 / VPI-5482 / E50), this protein is Large ribosomal subunit protein bL25.